The following is a 779-amino-acid chain: Membrane metallo-endopeptidase-like 1 (779 aa).

At 1-27 the chain is on the cytoplasmic side; it reads MGKSEGPVGMVESAGRAGQKRPGFLEG. A helical; Signal-anchor for type II membrane protein membrane pass occupies residues 28–48; that stretch reads GLLLLLLLVTAALVALGVLYA. Residues 49–779 are Lumenal-facing; that stretch reads DRRGKQLPRL…MHPKERCRVW (731 aa). Residues 88-779 enclose the Peptidase M13 domain; that stretch reads VCTTPGCVIA…MHPKERCRVW (692 aa). Cystine bridges form between Cys-89/Cys-94, Cys-112/Cys-764, Cys-120/Cys-724, Cys-175/Cys-439, and Cys-650/Cys-776. A peptide is bound at residue Arg-135. N-linked (GlcNAc...) asparagine glycosylation is found at Asn-177, Asn-207, Asn-350, and Asn-530. Residues 515–560 adopt a coiled-coil conformation; it reads LEEMNRRLDEEYSNLNFSEDLYFENSLQNLKVGAQRSLRKLREKVD. His-613 contributes to the Zn(2+) binding site. Residue Glu-614 is part of the active site. Zn(2+) is bound at residue His-617. Asn-657 is a glycosylation site (N-linked (GlcNAc...) asparagine). Residue Glu-676 participates in Zn(2+) binding. Asp-680 acts as the Proton donor in catalysis.

It belongs to the peptidase M13 family. It depends on Zn(2+) as a cofactor. In terms of processing, N-glycosylated. In terms of tissue distribution, predominantly expressed in testis. Weakly expressed in brain, kidney and heart.

The protein resides in the membrane. The protein localises to the secreted. It carries out the reaction Preferential cleavage of polypeptides between hydrophobic residues, particularly with Phe or Tyr at P1'.. With respect to regulation, inhibited by thiorphan and phosphoramidon. Its function is as follows. Metalloprotease involved in sperm function, possibly by modulating the processes of fertilization and early embryonic development. Degrades a broad variety of small peptides with a preference for peptides shorter than 3 kDa containing neutral bulky aliphatic or aromatic amino acid residues. Shares the same substrate specificity with MME and cleaves peptides at the same amide bond. This is Membrane metallo-endopeptidase-like 1 (MMEL1) from Homo sapiens (Human).